Reading from the N-terminus, the 76-residue chain is Small ribosomal subunit protein bS18 (76 aa).

It belongs to the bacterial ribosomal protein bS18 family. As to quaternary structure, part of the 30S ribosomal subunit. Forms a tight heterodimer with protein bS6.

In terms of biological role, binds as a heterodimer with protein bS6 to the central domain of the 16S rRNA, where it helps stabilize the platform of the 30S subunit. The protein is Small ribosomal subunit protein bS18 of Petrotoga mobilis (strain DSM 10674 / SJ95).